A 198-amino-acid polypeptide reads, in one-letter code: MHYPEPISKLIDSFMKLPGIGPKTAVRLAFFVLDMKEDDVLGFAKALVNAKRDLAYCSVCGHITDRDPCYICDDSHRDQSVVCVVQEPKDVIAMEKMKEYQGVYHVLRGAISPMEGIGPEDINIPQLLKRLQDETVQEVILATNPNIEGEATAMYISRLLKPTGIKVTRIAHGLPVGGDLEYADEVTLSKALEGRREI.

The C4-type zinc-finger motif lies at 57 to 72; that stretch reads CSVCGHITDRDPCYIC. The region spanning 80–175 is the Toprim domain; the sequence is SVVCVVQEPK…KVTRIAHGLP (96 aa).

It belongs to the RecR family.

Functionally, may play a role in DNA repair. It seems to be involved in an RecBC-independent recombinational process of DNA repair. It may act with RecF and RecO. The protein is Recombination protein RecR of Bacillus mycoides (strain KBAB4) (Bacillus weihenstephanensis).